The following is a 636-amino-acid chain: Protein meg-1 (636 aa).

Composition is skewed to polar residues over residues 1 to 13, 38 to 54, and 292 to 355; these read MDNR…NGNF, SSGN…NQQQ, and LSMN…QYNH. Disordered regions lie at residues 1–54, 289–367, 484–504, and 521–542; these read MDNR…NQQQ, LFNL…APHL, SDVA…SMYI, and LDSS…KTPS. S574 carries the phosphoserine; by mbk-2 modification. A disordered region spans residues 591–636; that stretch reads MSQSFLHQQDDEAPDCTKNVHSESDLKQAEPQESDKQSDKELPSNE. Residues 608–636 show a composition bias toward basic and acidic residues; sequence KNVHSESDLKQAEPQESDKQSDKELPSNE.

As to quaternary structure, interacts with pptr-1, pptr-2 and pgl-1. In terms of processing, phosphorylated by mbk-2, which promotes the disassembly of zygotic P granules in the anterior cytoplasm of pre-gastrulation embryos. Dephosphorylated by a phosphatase complex containing the PP2A regulatory subunit pptr-1, which promotes the assembly and accumulation of zygotic P granules in the posterior cytoplasm of pre-gastrulation embryos. As to expression, not expressed in the adult germline or in any somatic tissues.

The protein localises to the cytoplasmic granule. P granule component, which acts redundantly with P granule component meg-2 to promote P granule segregation during embryogenesis, and germ cell proliferation and differentiation in larval stages. In its phosphorylated form, and together with meg-2, promotes the disassembly of zygotic P granules in the anterior cytoplasm of pre-gastrulation embryos. In its dephosphorylated form, and together with meg-2, promotes the assembly and accumulation of zygotic P granules in the posterior cytoplasm of pre-gastrulation embryos. May function with the nanos family members nos-2 and nos-3 to promote germ cell proliferation during larval development. Required for fertility. In Caenorhabditis elegans, this protein is Protein meg-1.